The following is a 429-amino-acid chain: Asparagine--tRNA ligase (429 aa).

Belongs to the class-II aminoacyl-tRNA synthetase family.

It localises to the cytoplasm. The enzyme catalyses tRNA(Asn) + L-asparagine + ATP = L-asparaginyl-tRNA(Asn) + AMP + diphosphate + H(+). This Thermoplasma acidophilum (strain ATCC 25905 / DSM 1728 / JCM 9062 / NBRC 15155 / AMRC-C165) protein is Asparagine--tRNA ligase.